We begin with the raw amino-acid sequence, 216 residues long: tRNA (guanine-N(7)-)-methyltransferase (216 aa).

S-adenosyl-L-methionine-binding residues include Glu-44, Glu-69, Asn-96, and Asp-118. Residue Asp-118 is part of the active site. Residue Lys-122 coordinates substrate. An interaction with RNA region spans residues 124–129 (RHEKRR). Substrate contacts are provided by residues Asp-154 and 191 to 194 (TEYE).

It belongs to the class I-like SAM-binding methyltransferase superfamily. TrmB family.

It catalyses the reaction guanosine(46) in tRNA + S-adenosyl-L-methionine = N(7)-methylguanosine(46) in tRNA + S-adenosyl-L-homocysteine. Its pathway is tRNA modification; N(7)-methylguanine-tRNA biosynthesis. In terms of biological role, catalyzes the formation of N(7)-methylguanine at position 46 (m7G46) in tRNA. The polypeptide is tRNA (guanine-N(7)-)-methyltransferase (Geobacillus thermodenitrificans (strain NG80-2)).